A 173-amino-acid polypeptide reads, in one-letter code: Bifunctional protein PyrR (173 aa).

The PRPP-binding motif lies at 94–106 (VILIDDVLYTGRT).

It belongs to the purine/pyrimidine phosphoribosyltransferase family. PyrR subfamily. As to quaternary structure, homodimer and homohexamer; in equilibrium.

It catalyses the reaction UMP + diphosphate = 5-phospho-alpha-D-ribose 1-diphosphate + uracil. Its function is as follows. Regulates transcriptional attenuation of the pyrimidine nucleotide (pyr) operon by binding in a uridine-dependent manner to specific sites on pyr mRNA. This disrupts an antiterminator hairpin in the RNA and favors formation of a downstream transcription terminator, leading to a reduced expression of downstream genes. Also displays a weak uracil phosphoribosyltransferase activity which is not physiologically significant. In Streptococcus gordonii (strain Challis / ATCC 35105 / BCRC 15272 / CH1 / DL1 / V288), this protein is Bifunctional protein PyrR.